Reading from the N-terminus, the 790-residue chain is Threonine--tRNA ligase 2, cytoplasmic (790 aa).

The residue at position 2 (Ala-2) is an N-acetylalanine. Residues 13–68 (SRLQRQEEDIRWLCAEVQRLRDEQLRGPERGQAEGPRLTREVAQLQAENRDLHQRL) adopt a coiled-coil conformation. The interval 80–117 (RTEAGRAAAHEPPTQNQEKDTKKKRLKQSEPGREVKQP) is disordered. Over residues 96-117 (QEKDTKKKRLKQSEPGREVKQP) the composition is skewed to basic and acidic residues. The TGS domain maps to 148 to 210 (NVISVRVAGG…EGDSTVELLM (63 aa)). Ser-441 bears the Phosphoserine mark. A Nuclear localization signal motif is present at residues 774–780 (KLKNLKK).

The protein belongs to the class-II aminoacyl-tRNA synthetase family. As to quaternary structure, may be a component of the multisynthetase complex (MSC), a large multi-subunit complex which contains at least eight different aminoacyl-tRNA synthetases plus three auxillary subunits AIMP1, AIMP2 and EEF1E1. Interacts with the MSC components EPRS1, AIMP1, AIMP2 and KARS1. Ubiquitous (at protein level). Strongly expressed in muscle (at protein level). Moderately expressed in heart and liver (at protein level). Weakly expressed in stomach, kidney, testis, spleen, brain, fat and lung (at protein level).

The protein resides in the cytoplasm. The protein localises to the nucleus. The enzyme catalyses tRNA(Thr) + L-threonine + ATP = L-threonyl-tRNA(Thr) + AMP + diphosphate + H(+). Functionally, catalyzes the attachment of threonine to tRNA(Thr) in a two-step reaction: threonine is first activated by ATP to form Thr-AMP and then transferred to the acceptor end of tRNA(Thr). Also edits incorrectly charged tRNA(Thr) via its editing domain, at the post-transfer stage. The polypeptide is Threonine--tRNA ligase 2, cytoplasmic (Tars3) (Mus musculus (Mouse)).